The chain runs to 184 residues: ADP-ribosylation factor-like protein 2 (184 aa).

Residue glycine 2 is the site of N-myristoyl glycine attachment. GTP contacts are provided by residues 23–30 (GLDNAGKT), 66–70 (DVGGQ), glycine 68, and 125–128 (NKSD).

The protein belongs to the small GTPase superfamily. Arf family. As to expression, in the embryo, strongly expressed in migrating hypodermal cells. Shortly before the beginning of elongation, expressed in many developing neurons where it persists throughout adulthood. In the larva, highly expressed in migrating hypodermal cells and the uterus. Also expressed in vulva, spermatheca, sheath cells, distal tips cells and proctoderm of the male tail.

Its subcellular location is the cytoplasm. The protein resides in the cell membrane. It localises to the cytoskeleton. It is found in the microtubule organizing center. The protein localises to the centrosome. In terms of biological role, GTP-binding protein that functions in embryogenesis, cytokinesis, germline development and microtubulule cytoskeleton dynamics. The protein is ADP-ribosylation factor-like protein 2 (evl-20) of Caenorhabditis elegans.